The primary structure comprises 420 residues: Transcription activator GLK1 (420 aa).

A disordered region spans residues 74–152 (GDFSNHMNAS…NRISNNEGKR (79 aa)). Residues 106–117 (KGEEVVSKRDDV) show a composition bias toward basic and acidic residues. Over residues 135 to 147 (SSSASSKNNRISN) the composition is skewed to low complexity. Residues 150 to 209 (GKRKVKVDWTPELHRRFVEAVEQLGVDKAVPSRILELMGVHCLTRHNVASHLQKYRSHRK) constitute a DNA-binding region (myb-like GARP).

Interacts with NAC92. Expressed in rosette and cauline leaves. Expressed at low levels in cotyledons and shoots.

Its subcellular location is the nucleus. Functionally, transcriptional activator that functions with GLK2 to promote chloroplast development. Acts as an activator of nuclear photosynthetic genes involved in chlorophyll biosynthesis, light harvesting, and electron transport. Acts in a cell-autonomous manner to coordinate and maintain the photosynthetic apparatus within individual cells. May function in photosynthetic capacity optimization by integrating responses to variable environmental and endogenous cues. Prevents premature senescence. The chain is Transcription activator GLK1 (GLK1) from Arabidopsis thaliana (Mouse-ear cress).